The primary structure comprises 148 residues: D-aminoacyl-tRNA deacylase (148 aa).

The short motif at 137-138 (GP) is the Gly-cisPro motif, important for rejection of L-amino acids element.

This sequence belongs to the DTD family. As to quaternary structure, homodimer.

The protein localises to the cytoplasm. It carries out the reaction glycyl-tRNA(Ala) + H2O = tRNA(Ala) + glycine + H(+). It catalyses the reaction a D-aminoacyl-tRNA + H2O = a tRNA + a D-alpha-amino acid + H(+). Its function is as follows. An aminoacyl-tRNA editing enzyme that deacylates mischarged D-aminoacyl-tRNAs. Also deacylates mischarged glycyl-tRNA(Ala), protecting cells against glycine mischarging by AlaRS. Acts via tRNA-based rather than protein-based catalysis; rejects L-amino acids rather than detecting D-amino acids in the active site. By recycling D-aminoacyl-tRNA to D-amino acids and free tRNA molecules, this enzyme counteracts the toxicity associated with the formation of D-aminoacyl-tRNA entities in vivo and helps enforce protein L-homochirality. The chain is D-aminoacyl-tRNA deacylase from Deinococcus geothermalis (strain DSM 11300 / CIP 105573 / AG-3a).